Consider the following 180-residue polypeptide: Oligoribonuclease (180 aa).

The Exonuclease domain occupies 7–170; it reads LIWIDLEMTG…DDIRESIAEL (164 aa). Residue Tyr128 is part of the active site.

This sequence belongs to the oligoribonuclease family.

The protein resides in the cytoplasm. Its function is as follows. 3'-to-5' exoribonuclease specific for small oligoribonucleotides. The chain is Oligoribonuclease from Pseudomonas putida (strain ATCC 700007 / DSM 6899 / JCM 31910 / BCRC 17059 / LMG 24140 / F1).